The following is a 321-amino-acid chain: MASANHPESGSISGYDHGSRRILIVTGLSGAGKSSILRVLEDLGHEVVDNPPLNLIQALASRAGQNLAIGIDVRSRGFEASRVLEELERLRLLPDCSVQLLYATAEPEILLRRFTATRRRHPLVTSGTILPGIEQETALLAPLRANADLVIDTSDLPSPELRQLIETRFGSTGGEGLTVALMSFAYPSGLPREADMVFDARFLRNPHYDPTLQPMTGLDEAVVQYVKSDPAYPAFFGHIQSLLELVLPRFVAEGKKYATIAIGCSGGRHRSVTIVEELARILPKTVPVGPMMVLHRELARKGLASWRWAVPPQDPSQDTTV.

Position 27–34 (27–34 (GLSGAGKS)) interacts with ATP. Residue 72–75 (DVRS) participates in GTP binding.

Belongs to the RapZ-like family.

In terms of biological role, displays ATPase and GTPase activities. This chain is Nucleotide-binding protein GOX0815, found in Gluconobacter oxydans (strain 621H) (Gluconobacter suboxydans).